A 191-amino-acid polypeptide reads, in one-letter code: MSLVLVAVLALLGLCLIAGAILGFAAVRFKVEGDPIAEQINALLPQTQCGQCGYPGCKPYAEAIAGGDKINKCPPGGEATIQALADLLDVEPEPLDAVEGEKPQMVAFIREAECIGCTKCIQACPVDAIVGAARQMHTVIVSECTGCDLCVEPCPVDCIDMIEVGSTVQSWKWDKPLAPGQLIASDREQAA.

Residues 1-26 (MSLVLVAVLALLGLCLIAGAILGFAA) form a hydrophobic region. Positions 32-90 (EGDPIAEQINALLPQTQCGQCGYPGCKPYAEAIAGGDKINKCPPGGEATIQALADLLDV) constitute a 4Fe-4S domain. The [4Fe-4S] cluster site is built by Cys-49, Cys-52, Cys-57, Cys-73, Cys-114, Cys-117, Cys-120, Cys-124, Cys-144, Cys-147, Cys-150, and Cys-154. 2 4Fe-4S ferredoxin-type domains span residues 105 to 134 (MVAF…GAAR) and 135 to 164 (QMHT…MIEV).

Belongs to the 4Fe4S bacterial-type ferredoxin family. RnfB subfamily. In terms of assembly, the complex is composed of six subunits: RnfA, RnfB, RnfC, RnfD, RnfE and RnfG. Requires [4Fe-4S] cluster as cofactor.

The protein localises to the cell inner membrane. Part of a membrane-bound complex that couples electron transfer with translocation of ions across the membrane. This chain is Ion-translocating oxidoreductase complex subunit B, found in Ectopseudomonas mendocina (strain ymp) (Pseudomonas mendocina).